The chain runs to 264 residues: S-adenosylmethionine decarboxylase proenzyme (264 aa).

Ser-113 functions as the Schiff-base intermediate with substrate; via pyruvic acid in the catalytic mechanism. Ser-113 carries the pyruvic acid (Ser); by autocatalysis modification. The active-site Proton acceptor; for processing activity is the His-118. Cys-141 serves as the catalytic Proton donor; for catalytic activity.

Belongs to the prokaryotic AdoMetDC family. Type 2 subfamily. In terms of assembly, heterooctamer of four alpha and four beta chains arranged as a tetramer of alpha/beta heterodimers. It depends on pyruvate as a cofactor. Is synthesized initially as an inactive proenzyme. Formation of the active enzyme involves a self-maturation process in which the active site pyruvoyl group is generated from an internal serine residue via an autocatalytic post-translational modification. Two non-identical subunits are generated from the proenzyme in this reaction, and the pyruvate is formed at the N-terminus of the alpha chain, which is derived from the carboxyl end of the proenzyme. The post-translation cleavage follows an unusual pathway, termed non-hydrolytic serinolysis, in which the side chain hydroxyl group of the serine supplies its oxygen atom to form the C-terminus of the beta chain, while the remainder of the serine residue undergoes an oxidative deamination to produce ammonia and the pyruvoyl group blocking the N-terminus of the alpha chain.

It catalyses the reaction S-adenosyl-L-methionine + H(+) = S-adenosyl 3-(methylsulfanyl)propylamine + CO2. It participates in amine and polyamine biosynthesis; S-adenosylmethioninamine biosynthesis; S-adenosylmethioninamine from S-adenosyl-L-methionine: step 1/1. Functionally, catalyzes the decarboxylation of S-adenosylmethionine to S-adenosylmethioninamine (dcAdoMet), the propylamine donor required for the synthesis of the polyamines spermine and spermidine from the diamine putrescine. The chain is S-adenosylmethionine decarboxylase proenzyme from Stenotrophomonas maltophilia (strain K279a).